The primary structure comprises 108 residues: Mitochondrial pyruvate carrier 4 (108 aa).

3 helical membrane passes run 19–35 (IHFWAPTFKWGISIANI), 51–67 (IAVTCTGVIWSRYSMVI), and 74–90 (LFSVNVAMAGTGIYQLA).

Belongs to the mitochondrial pyruvate carrier (MPC) (TC 2.A.105) family.

It localises to the mitochondrion inner membrane. Its function is as follows. Mediates the uptake of pyruvate into mitochondria. This is Mitochondrial pyruvate carrier 4 from Arabidopsis thaliana (Mouse-ear cress).